We begin with the raw amino-acid sequence, 206 residues long: Cytochrome c (206 aa).

3 helical membrane passes run 10–30 (IALA…VSFL), 49–69 (FMGW…LGKM), and 76–96 (KWFL…FLSL). The heme site is built by cysteine 152, cysteine 155, histidine 156, and methionine 182.

Monomer. Component of the photosynthetic reaction center composed of protein subunits PscA, PscC, PscB and PscD. The reaction center interacts with FmoA (which forms the Fenna-Matthews-Olson (FMO) complex). The reaction center/FmoA complex has two PscA subunits, one PscB and one PscD subunit, probably two FmoA complexes and at least one PscC subunit. Post-translationally, binds 1 heme group per subunit.

The protein resides in the cell inner membrane. In terms of biological role, monoheme cytochrome which is the immediate electron donor to P840 of the photosynthetic reaction center complex. The protein is Cytochrome c (pscC) of Chlorobaculum tepidum (strain ATCC 49652 / DSM 12025 / NBRC 103806 / TLS) (Chlorobium tepidum).